A 109-amino-acid polypeptide reads, in one-letter code: Non-structural protein of 12.7 kDa (109 aa).

The protein belongs to the coronaviruses ns12.7 protein family.

The protein is Non-structural protein of 12.7 kDa of Bos taurus (Bovine).